A 602-amino-acid chain; its full sequence is Elongation factor 4 (602 aa).

Residues aspartate 6 to lysine 188 form the tr-type G domain. GTP is bound by residues aspartate 18–threonine 23 and asparagine 135–aspartate 138.

This sequence belongs to the TRAFAC class translation factor GTPase superfamily. Classic translation factor GTPase family. LepA subfamily.

It localises to the cell inner membrane. It carries out the reaction GTP + H2O = GDP + phosphate + H(+). Functionally, required for accurate and efficient protein synthesis under certain stress conditions. May act as a fidelity factor of the translation reaction, by catalyzing a one-codon backward translocation of tRNAs on improperly translocated ribosomes. Back-translocation proceeds from a post-translocation (POST) complex to a pre-translocation (PRE) complex, thus giving elongation factor G a second chance to translocate the tRNAs correctly. Binds to ribosomes in a GTP-dependent manner. The protein is Elongation factor 4 of Brucella melitensis biotype 2 (strain ATCC 23457).